The chain runs to 347 residues: Endophilin-A3 (347 aa).

The interval methionine 1–isoleucine 21 is membrane-binding amphipathic helix. Residues serine 18–lysine 249 enclose the BAR domain. A required for dimerization upon membrane association region spans residues proline 60–proline 87. Residues glutamate 180–methionine 201 are a coiled coil. The interval phenylalanine 218 to glutamate 254 is interaction with ARC. A disordered region spans residues phenylalanine 255–proline 288. Over residues asparagine 261 to threonine 281 the composition is skewed to polar residues. Residues alanine 285 to proline 344 form the SH3 domain.

It belongs to the endophilin family. As to quaternary structure, interacts with ARC, DNM1, SGIP1, SYNJ1 and DYDC1. Interacts with FASLG. Interacts with ATXN2. Interacts with BIN2.

The protein localises to the cytoplasm. It localises to the early endosome membrane. In terms of biological role, implicated in endocytosis. May recruit other proteins to membranes with high curvature. In Mus musculus (Mouse), this protein is Endophilin-A3 (Sh3gl3).